Consider the following 4730-residue polypeptide: Dynein heavy chain, cytoplasmic (4730 aa).

2 disordered regions span residues 1–23 and 91–120; these read MEDQQINVDSPTSGTNTPPVVTP and TINSSNQTSTTTSSSSSSDDNTLTSSQQQS. The segment at 1–1935 is stem; the sequence is MEDQQINVDS…VIHMANATFY (1935 aa). The span at 10-23 shows a compositional bias: low complexity; the sequence is SPTSGTNTPPVVTP. Residues 867–900 adopt a coiled-coil conformation; it reads VRKLSTSINNFRDKVDDLIVKYSEIKKQLDGLKS. Residues 964-1016 form a disordered region; that stretch reads EDQKDSQSTSGSSNKGGKLNRMNYSIRNKSDEENSSDLTQPQQSQQQQQTISI. The segment covering 969–978 has biased composition (polar residues); that stretch reads SQSTSGSSNK. Positions 1002–1016 are enriched in low complexity; the sequence is TQPQQSQQQQQTISI. 4 coiled-coil regions span residues 1204-1224, 1343-1372, 1425-1441, and 1661-1689; these read EKMNQFYETISSSRQELEKLS, ALETLKIFEGRLIRLREESDRLSKAKQALD, RKVRKSLEDTLQKLKNL, and AIERIQQTMERLSDLLGKVQKALGEYLER. AAA regions lie at residues 1936-2158, 2238-2531, 2635-2885, and 2978-3252; these read YGFE…VLVS, KKIQ…FTRL, EVET…WDRA, and VFYE…QGRQ. 1974 to 1981 provides a ligand contact to ATP; that stretch reads GPAGTGKT. The stretch at 2231–2253 forms a coiled coil; sequence IQMDQLRKKIQEIAKQRHLVTKQ. 2276 to 2283 contributes to the ATP binding site; sequence GPSGGGKT. The disordered stretch occupies residues 2437-2486; it reads EPFDPQEKEQQKRNENAQLQQQQQTTITSPILTSPPTTSSSSRSTTSTTS. The span at 2441 to 2451 shows a compositional bias: basic and acidic residues; that stretch reads PQEKEQQKRNE. A coiled-coil region spans residues 2442–2462; that stretch reads QEKEQQKRNENAQLQQQQQTT. The segment covering 2454–2486 has biased composition (low complexity); it reads QLQQQQQTTITSPILTSPPTTSSSSRSTTSTTS. ATP contacts are provided by residues 2674-2681 and 3016-3023; these read GPPGSGKT and GVSGGGKS. 3 coiled-coil regions span residues 3271–3349, 3483–3585, and 3854–3881; these read INEK…VQLD, AQTY…NTQM, and TLETLKKETTEIALKVEETETVMQEISE. The tract at residues 3271 to 3585 is stalk; the sequence is INEKRDQLEE…QQSENFNTQM (315 aa). AAA regions lie at residues 3638–3867 and 4098–4312; these read LSKP…EIAL and SHSF…SIDY. The segment at 4432–4465 is disordered; that stretch reads KMQSSEEDGEDDQVSGSSKKESSSSSSEDKGKAK. The span at 4449–4463 shows a compositional bias: basic and acidic residues; sequence SKKESSSSSSEDKGK.

This sequence belongs to the dynein heavy chain family. As to quaternary structure, consists of at least two heavy chains and a number of intermediate and light chains.

Its subcellular location is the cytoplasm. It is found in the cytoskeleton. Cytoplasmic dynein acts as a motor for the intracellular retrograde motility of vesicles and organelles along microtubules. Dynein has ATPase activity; the force-producing power stroke is thought to occur on release of ADP. This is Dynein heavy chain, cytoplasmic (dhcA) from Dictyostelium discoideum (Social amoeba).